Here is a 642-residue protein sequence, read N- to C-terminus: Threonine--tRNA ligase (642 aa).

Residues 1 to 61 (MPIITLPDGS…EEDASLEIIT (61 aa)) form the TGS domain. Positions 244–535 (DHRKIGKQLD…LIEEYAGFFP (292 aa)) are catalytic. The Zn(2+) site is built by Cys335, His386, and His512.

This sequence belongs to the class-II aminoacyl-tRNA synthetase family. As to quaternary structure, homodimer. Zn(2+) is required as a cofactor.

It localises to the cytoplasm. It catalyses the reaction tRNA(Thr) + L-threonine + ATP = L-threonyl-tRNA(Thr) + AMP + diphosphate + H(+). In terms of biological role, catalyzes the attachment of threonine to tRNA(Thr) in a two-step reaction: L-threonine is first activated by ATP to form Thr-AMP and then transferred to the acceptor end of tRNA(Thr). Also edits incorrectly charged L-seryl-tRNA(Thr). The protein is Threonine--tRNA ligase of Vibrio parahaemolyticus serotype O3:K6 (strain RIMD 2210633).